Here is an 81-residue protein sequence, read N- to C-terminus: Saposin-C (81 aa).

In terms of domain architecture, Saposin B-type spans 1-81 (ESVTCKACEY…CSELGLCMSG (81 aa)). 3 disulfides stabilise this stretch: Cys-5–Cys-78, Cys-8–Cys-72, and Cys-36–Cys-47. The N-linked (GlcNAc...) asparagine glycan is linked to Asn-22.

Its function is as follows. Saposin-A and saposin-C stimulate the hydrolysis of glucosylceramide by beta-glucosylceramidase (EC 3.2.1.45) and galactosylceramide by beta-galactosylceramidase (EC 3.2.1.46). Saposin-C apparently acts by combining with the enzyme and acidic lipid to form an activated complex, rather than by solubilizing the substrate. The sequence is that of Saposin-C (PSAP) from Cavia porcellus (Guinea pig).